A 175-amino-acid chain; its full sequence is NADH-quinone oxidoreductase subunit B (175 aa).

Positions 54, 55, 119, and 149 each coordinate [4Fe-4S] cluster.

It belongs to the complex I 20 kDa subunit family. In terms of assembly, NDH-1 is composed of at least 14 different subunits, Nqo1 to Nqo14. The complex has a L-shaped structure, with the hydrophobic arm (subunits Nqo7, Nqo8, Nqo10 to Nqo14) embedded in the inner membrane and the hydrophilic peripheral arm (subunits Nqo1 to Nqo6, Nqo9) protruding into the bacterial cytoplasm. The hydrophilic domain contains all the redox centers. NADH-quinone oxidoreductase forms a supercomplex with ubiquinol-cytochrome c reductase complex (complex III or cytochrome b-c1 complex) and cytochrome c oxidase (complex IV), which stabilizes the NADH-quinone oxidoreductase complex. Requires [4Fe-4S] cluster as cofactor.

Its subcellular location is the cell inner membrane. It carries out the reaction a quinone + NADH + 5 H(+)(in) = a quinol + NAD(+) + 4 H(+)(out). NDH-1 shuttles electrons from NADH, via FMN and iron-sulfur (Fe-S) centers, to quinones in the respiratory chain. The immediate electron acceptor for the enzyme in this species is believed to be ubiquinone. Couples the redox reaction to proton translocation (for every two electrons transferred, four hydrogen ions are translocated across the cytoplasmic membrane), and thus conserves the redox energy in a proton gradient. The protein is NADH-quinone oxidoreductase subunit B of Paracoccus denitrificans (strain Pd 1222).